The following is a 434-amino-acid chain: Cytochrome c biogenesis protein CcsB (434 aa).

A run of 3 helical transmembrane segments spans residues 15-35 (LRVA…GTAI), 73-93 (SNWF…CSLR), and 163-183 (VGPL…VVGA).

The protein belongs to the Ccs1/CcsB family. As to quaternary structure, may interact with CcsA.

The protein localises to the cellular thylakoid membrane. In terms of biological role, required during biogenesis of c-type cytochromes (cytochrome c6 and cytochrome f) at the step of heme attachment. The protein is Cytochrome c biogenesis protein CcsB of Synechococcus sp. (strain RCC307).